The chain runs to 70 residues: Large ribosomal subunit protein bL32 (70 aa).

Residues 1-19 (MAVPKKKTSPSRRGMRRSH) are compositionally biased toward basic residues. Residues 1-21 (MAVPKKKTSPSRRGMRRSHQA) are disordered.

Belongs to the bacterial ribosomal protein bL32 family.

This chain is Large ribosomal subunit protein bL32, found in Granulibacter bethesdensis (strain ATCC BAA-1260 / CGDNIH1).